A 468-amino-acid polypeptide reads, in one-letter code: ATP synthase subunit beta (468 aa).

153-160 lines the ATP pocket; it reads GGAGVGKT.

This sequence belongs to the ATPase alpha/beta chains family. In terms of assembly, F-type ATPases have 2 components, CF(1) - the catalytic core - and CF(0) - the membrane proton channel. CF(1) has five subunits: alpha(3), beta(3), gamma(1), delta(1), epsilon(1). CF(0) has three main subunits: a(1), b(2) and c(9-12). The alpha and beta chains form an alternating ring which encloses part of the gamma chain. CF(1) is attached to CF(0) by a central stalk formed by the gamma and epsilon chains, while a peripheral stalk is formed by the delta and b chains.

It is found in the cell membrane. The enzyme catalyses ATP + H2O + 4 H(+)(in) = ADP + phosphate + 5 H(+)(out). In terms of biological role, produces ATP from ADP in the presence of a proton gradient across the membrane. The catalytic sites are hosted primarily by the beta subunits. This Ligilactobacillus salivarius (strain UCC118) (Lactobacillus salivarius) protein is ATP synthase subunit beta.